Consider the following 215-residue polypeptide: Ankyrin repeat domain-containing protein 49 (215 aa).

2 ANK repeats span residues 81-110 (DGYT…NPNA) and 114-143 (LGWT…DVNA).

Interacts with Bdbt; interaction promotes the stability of both complex members.

Its subcellular location is the cytoplasm. It localises to the cytosol. The protein resides in the cell membrane. In terms of biological role, required for regulating the establishment of planar cell polarity in the wing. Forms a complex with Bdbt which likely functions in the regulation of planar polarity by promoting the activity of Dco during planar polarity establishment. Within the complex, probably functions to stabilize Bdbt, while Bdbt directly promotes Dco activity in regulating phosphorylation of core proteins such as dsh, and asymmetric localization. The sequence is that of Ankyrin repeat domain-containing protein 49 from Drosophila melanogaster (Fruit fly).